Reading from the N-terminus, the 1609-residue chain is Chitin synthase 5 (1609 aa).

3 disordered regions span residues 1-188 (MNPF…DRER), 248-280 (SGLG…GRDE), and 294-320 (VSLR…ESKT). The Cytoplasmic segment spans residues 1–326 (MNPFESLPDA…ESKTSRIAPG (326 aa)). A compositionally biased stretch (polar residues) spans 34–44 (PGSTGRPQNPI). The span at 61–82 (PQQQQQQQQQQQQQQQRSQQPF) shows a compositional bias: low complexity. Residues 100-111 (AYLNSTSSQPTQ) are compositionally biased toward polar residues. Basic and acidic residues predominate over residues 134-146 (DSVKSYGDDKRSI). Positions 147–163 (NDPNSSSTALTQVNSLD) are enriched in polar residues. Positions 253-267 (TGPTNVPPGGLGRAP) are enriched in low complexity. Over residues 307 to 320 (PSKEVPRDLGESKT) the composition is skewed to basic and acidic residues. A helical membrane pass occupies residues 327–347 (PVGGWMIYCYILTICCPGPFL). The Extracellular segment spans residues 348 to 364 (RIFGIRTPEQQRAWREK). A helical transmembrane segment spans residues 365 to 385 (MGLIGIITLIMAAVGFLTFGF). Residues 386–624 (TQTVCGQQPD…ASKVELYLSL (239 aa)) are Cytoplasmic-facing. Residues 625-645 (VFIIGVVAIKFFMAVMFGWFI) traverse the membrane as a helical segment. The Extracellular portion of the chain corresponds to 646–1176 (SWRLGNYANE…MRFVVFMELT (531 aa)). An N-linked (GlcNAc...) asparagine glycan is attached at N654. Residues 729-767 (GVASPLGGSPPGSPSVAGGRSSASLAPAHSRRSSFSGSP) are disordered. Over residues 742–752 (PSVAGGRSSAS) the composition is skewed to low complexity. N1015 and N1144 each carry an N-linked (GlcNAc...) asparagine glycan. A helical transmembrane segment spans residues 1177-1197 (GTLVLPAAIAFTLYVVVQAFL). At 1198–1202 (PNVPT) the chain is on the cytoplasmic side. The helical transmembrane segment at 1203-1223 (PTIPLILLALILGLPGILIVV) threads the bilayer. Residues 1224-1227 (TSRK) lie on the Extracellular side of the membrane. A helical membrane pass occupies residues 1228-1248 (IAYVGWMLIYLLSLPIWNFVL). Residues 1249 to 1609 (PLYAYWHMDD…PPGAAPPSFD (361 aa)) lie on the Cytoplasmic side of the membrane. 2 disordered regions span residues 1354-1381 (PNAM…PSGA) and 1399-1609 (TDAK…PSFD). Composition is skewed to polar residues over residues 1502 to 1514 (NVST…TVSE) and 1530 to 1552 (GSAS…QTRP). The segment covering 1568-1588 (AQGVRQVQRGARRSQMPNSAA) has biased composition (low complexity).

Belongs to the chitin synthase family. Class IV subfamily.

Its subcellular location is the cell membrane. The protein localises to the cytoplasmic vesicle membrane. The catalysed reaction is [(1-&gt;4)-N-acetyl-beta-D-glucosaminyl](n) + UDP-N-acetyl-alpha-D-glucosamine = [(1-&gt;4)-N-acetyl-beta-D-glucosaminyl](n+1) + UDP + H(+). Its function is as follows. Polymerizes chitin, a structural polymer of the cell wall and septum, by transferring the sugar moiety of UDP-GlcNAc to the non-reducing end of the growing chitin polymer. This chain is Chitin synthase 5, found in Mycosarcoma maydis (Corn smut fungus).